The sequence spans 179 residues: Large ribosomal subunit protein uL6 (179 aa).

Belongs to the universal ribosomal protein uL6 family. Part of the 50S ribosomal subunit.

This protein binds to the 23S rRNA, and is important in its secondary structure. It is located near the subunit interface in the base of the L7/L12 stalk, and near the tRNA binding site of the peptidyltransferase center. This is Large ribosomal subunit protein uL6 from Geobacter metallireducens (strain ATCC 53774 / DSM 7210 / GS-15).